The following is a 248-amino-acid chain: (2S)-[(R)-hydroxy(phenyl)methyl]succinyl-CoA dehydrogenase subunit BbsD (248 aa).

NAD(+)-binding residues include Ser15, Asp36, Asp62, Ile63, Asn89, Tyr153, and Lys157. Tyr153 functions as the Proton acceptor in the catalytic mechanism.

This sequence belongs to the short-chain dehydrogenases/reductases (SDR) family. In terms of assembly, heterotetramer composed of 2 inactive BbsC subunits and 2 active BbsD subunits.

It catalyses the reaction (2S)-[(R)-hydroxy(phenyl)methyl]succinyl-CoA + NAD(+) = (S)-2-benzoylsuccinyl-CoA + NADH + H(+). It participates in xenobiotic degradation; toluene degradation. Its activity is regulated as follows. Activity is probably regulated by the inactive BbsC subunit. Functionally, involved in an anaerobic toluene degradation pathway. Active subunit that catalyzes the oxidation of 2-(alpha-hydroxybenzyl)succinyl-CoA to 2-benzoylsuccinyl-CoA. In vitro, can catalyze the NADH-dependent reduction of the artificial substrates 2,2-dichloroacetophene and 2,4'-dichloroacetophenone. This chain is (2S)-[(R)-hydroxy(phenyl)methyl]succinyl-CoA dehydrogenase subunit BbsD, found in Thauera aromatica.